Here is a 285-residue protein sequence, read N- to C-terminus: Bark agglutinin I polypeptide A (285 aa).

The signal sequence occupies residues 1–31 (MTSYNFKTQTSFPLLLSISFFFLLLLNKVNS). Residue Asn147 is glycosylated (N-linked (GlcNAc...) asparagine). Residues Glu156 and Asp158 each coordinate Mn(2+). 4 residues coordinate Ca(2+): Asp158, Phe160, Asn162, and Asp166. Asp166 and His171 together coordinate Mn(2+). Asn188 carries N-linked (GlcNAc...) asparagine glycosylation.

It belongs to the leguminous lectin family. RPbAI is composed of two polypeptides, A and B, that associate into five different tetrameric isolectins. The A4 combination is the only one devoid of agglutination activity. Isoform B4 displays maximal agglutination activity. In terms of tissue distribution, strong expression in seed. Lower levels in the flower, and the bark of the roots. No expression in leaf. The lectin accumulates in the inner bark in autumn.

Functionally, N-acetyl-D-galactosamine specific lectin. Bark lectins are storage protein that probably maintains stocks of nitrogen during dormant period. Self-aggregatable molecules that can bind their own carbohydrate side chains. They could also play a role in the plant's defense against phytophagous invertebrates or herbivorous higher animals. The chain is Bark agglutinin I polypeptide A from Robinia pseudoacacia (Black locust).